Reading from the N-terminus, the 150-residue chain is Large ribosomal subunit protein bL9 (150 aa).

This sequence belongs to the bacterial ribosomal protein bL9 family.

Its function is as follows. Binds to the 23S rRNA. The sequence is that of Large ribosomal subunit protein bL9 from Burkholderia ambifaria (strain MC40-6).